A 382-amino-acid polypeptide reads, in one-letter code: Queuine tRNA-ribosyltransferase (382 aa).

Catalysis depends on D89, which acts as the Proton acceptor. Substrate is bound by residues 89-93 (DSGGF), D143, Q187, and G214. The tract at residues 245 to 251 (GVGKPED) is RNA binding. D264 acts as the Nucleophile in catalysis. The RNA binding; important for wobble base 34 recognition stretch occupies residues 269–273 (TRNAR). Residues C302, C304, C307, and H333 each coordinate Zn(2+).

This sequence belongs to the queuine tRNA-ribosyltransferase family. As to quaternary structure, homodimer. Within each dimer, one monomer is responsible for RNA recognition and catalysis, while the other monomer binds to the replacement base PreQ1. Zn(2+) serves as cofactor.

It catalyses the reaction 7-aminomethyl-7-carbaguanine + guanosine(34) in tRNA = 7-aminomethyl-7-carbaguanosine(34) in tRNA + guanine. The protein operates within tRNA modification; tRNA-queuosine biosynthesis. Functionally, catalyzes the base-exchange of a guanine (G) residue with the queuine precursor 7-aminomethyl-7-deazaguanine (PreQ1) at position 34 (anticodon wobble position) in tRNAs with GU(N) anticodons (tRNA-Asp, -Asn, -His and -Tyr). Catalysis occurs through a double-displacement mechanism. The nucleophile active site attacks the C1' of nucleotide 34 to detach the guanine base from the RNA, forming a covalent enzyme-RNA intermediate. The proton acceptor active site deprotonates the incoming PreQ1, allowing a nucleophilic attack on the C1' of the ribose to form the product. After dissociation, two additional enzymatic reactions on the tRNA convert PreQ1 to queuine (Q), resulting in the hypermodified nucleoside queuosine (7-(((4,5-cis-dihydroxy-2-cyclopenten-1-yl)amino)methyl)-7-deazaguanosine). This is Queuine tRNA-ribosyltransferase from Sodalis glossinidius (strain morsitans).